The chain runs to 227 residues: Cytidylate kinase (227 aa).

12-20 (GPSGAGKGT) contributes to the ATP binding site.

The protein belongs to the cytidylate kinase family. Type 1 subfamily.

Its subcellular location is the cytoplasm. It carries out the reaction CMP + ATP = CDP + ADP. The enzyme catalyses dCMP + ATP = dCDP + ADP. This is Cytidylate kinase from Escherichia fergusonii (strain ATCC 35469 / DSM 13698 / CCUG 18766 / IAM 14443 / JCM 21226 / LMG 7866 / NBRC 102419 / NCTC 12128 / CDC 0568-73).